A 382-amino-acid polypeptide reads, in one-letter code: Putative phospholipase A1 (382 aa).

A signal peptide spans 1–27 (MPTMGAEMNTRNMRYILLTGLLPMASA). The Periplasmic portion of the chain corresponds to 28–65 (FGETALQCAALTDNVTRLACYDRIFAAQLPSSAGQEGQ). A beta stranded membrane pass occupies residues 66 to 78 (ESKAVLNLTETVR). Residues 79 to 168 (SSLDKGEAVI…VQEKFGQQKR (90 aa)) are Extracellular-facing. The chain crosses the membrane as a beta stranded span at residues 169–183 (AETKLQVSFKSKIAE). At 184 to 189 (DLFKTR) the chain is on the periplasmic side. The chain crosses the membrane as a beta stranded span at residues 190-202 (ADLWFGYTQRSDW). Residues 203–213 (QIYNQGRKSAP) lie on the Extracellular side of the membrane. Ser-211 is a binding site for Ca(2+). The chain crosses the membrane as a beta stranded span at residues 214-233 (FRNTDYKPEIFLTQPVKADL). The Periplasmic portion of the chain corresponds to 234-236 (PFG). The chain crosses the membrane as a beta stranded span at residues 237–250 (GRLRMLGAGFVHQS). The Proton acceptor role is filled by His-248. Residue Ser-250 is the Nucleophile of the active site. Topologically, residues 251-259 (NGQSRPESR) are extracellular. Ser-258 lines the Ca(2+) pocket. A beta stranded transmembrane segment spans residues 260-272 (SWNRIYAMAGMEW). Residues 273 to 274 (GK) are Periplasmic-facing. The beta stranded transmembrane segment at 275-284 (LTVIPRVWVR) threads the bilayer. The Extracellular portion of the chain corresponds to 285 to 306 (AFDQSGDKNDNPDIADYMGYGD). Asp-294 serves as a coordination point for Ca(2+). Residues 307 to 313 (VKLQYRL) traverse the membrane as a beta stranded segment. Topologically, residues 314 to 315 (ND) are periplasmic. The chain crosses the membrane as a beta stranded span at residues 316 to 325 (RQNVYSVLRY). Over 326–332 (NPKTGYG) the chain is Extracellular. Residues 333–341 (AIEAAYTFP) traverse the membrane as a beta stranded segment. Residues 342-346 (IKGKL) lie on the Periplasmic side of the membrane. A beta stranded transmembrane segment spans residues 347 to 356 (KGVVRGFHGY). At 357 to 365 (GESLIDYNH) the chain is on the extracellular side. The chain crosses the membrane as a beta stranded span at residues 366–377 (KQNGIGIGLMFN). Over 378–382 (DLDGI) the chain is Periplasmic.

It belongs to the phospholipase A1 family. As to quaternary structure, homodimer; dimerization is reversible, and the dimeric form is the active one. It depends on Ca(2+) as a cofactor.

The protein localises to the cell outer membrane. The enzyme catalyses a 1,2-diacyl-sn-glycero-3-phosphocholine + H2O = a 2-acyl-sn-glycero-3-phosphocholine + a fatty acid + H(+). The catalysed reaction is a 1,2-diacyl-sn-glycero-3-phosphocholine + H2O = a 1-acyl-sn-glycero-3-phosphocholine + a fatty acid + H(+). Its function is as follows. Hydrolysis of phosphatidylcholine with phospholipase A2 (EC 3.1.1.4) and phospholipase A1 (EC 3.1.1.32) activities. This chain is Putative phospholipase A1, found in Neisseria meningitidis serogroup B (strain ATCC BAA-335 / MC58).